A 463-amino-acid polypeptide reads, in one-letter code: Putative F-box protein At3g29830 (463 aa).

An F-box domain is found at 7–55 (RDRISSLPDVVLVMILSFLSFKDNVKTSILSKRWRNICYEAKNISFKES).

The sequence is that of Putative F-box protein At3g29830 from Arabidopsis thaliana (Mouse-ear cress).